Consider the following 392-residue polypeptide: F-box only protein 5-A (392 aa).

The disordered stretch occupies residues 1-21 (MMCGFASNQSPKKLSSKKSSA). Positions 7 to 20 (SNQSPKKLSSKKSS) are enriched in low complexity. The region spanning 197 to 244 (AELFHRDFKHLLTKILRHLSAMDLINVISVSTTWRKLLQKDNWAYNAY) is the F-box domain. Residues 319-367 (SLKVCVDCGSPAKHDPCLHRAICTRESCKLDFCTRCSCKYHFSKSCLMS) form a ZBR-type zinc finger. Cys323, Cys326, Cys341, Cys346, Cys351, Cys354, His359, and Cys364 together coordinate Zn(2+).

Part of a SCF (SKP1-cullin-F-box) protein ligase complex. Interacts with btrc. Interacts with skp1. Interacts with cdc20. Interacts with pin1; stabilizes fbxo5 by preventing its association with btrc in an isomerization-dependent pathway; this interaction is present during G2 phase and prevents fbxo5 degradation. Interacts with plk1. In terms of processing, proteolysed; proteolysis is induced by both cyclin B-cdk1 and cyclin A-cdk1/2 complex through probable phosphorylation. Proteolysis is inhibited by pin1 during G2.

It is found in the nucleus. It localises to the cytoplasm. The protein localises to the cytoskeleton. The protein resides in the spindle. Its subcellular location is the microtubule organizing center. It is found in the centrosome. It participates in protein modification; protein ubiquitination. In terms of biological role, regulates progression through early mitosis by inhibiting the anaphase promoting complex/cyclosome (APC). Binds to the APC activator cdc20 to prevent APC activation. Can also bind directly to the APC to inhibit substrate-binding. Required to arrest unfertilized eggs at metaphase of meiosis II, by preventing their release from metaphase of meiosis II, through inhibition of APC-dependent cyclin B destruction leading to stabilization of cyclin B-cdk1 complex activity. The protein is F-box only protein 5-A (fbxo5-a) of Xenopus laevis (African clawed frog).